A 398-amino-acid chain; its full sequence is Probable aminomethyltransferase (398 aa).

Belongs to the GcvT family. The glycine cleavage system is composed of four proteins: P, T, L and H.

It carries out the reaction N(6)-[(R)-S(8)-aminomethyldihydrolipoyl]-L-lysyl-[protein] + (6S)-5,6,7,8-tetrahydrofolate = N(6)-[(R)-dihydrolipoyl]-L-lysyl-[protein] + (6R)-5,10-methylene-5,6,7,8-tetrahydrofolate + NH4(+). Its function is as follows. The glycine cleavage system catalyzes the degradation of glycine. In Pyrococcus abyssi (strain GE5 / Orsay), this protein is Probable aminomethyltransferase.